The chain runs to 131 residues: Holo-[acyl-carrier-protein] synthase (131 aa).

Positions 8 and 58 each coordinate Mg(2+).

Belongs to the P-Pant transferase superfamily. AcpS family. Requires Mg(2+) as cofactor.

It is found in the cytoplasm. It catalyses the reaction apo-[ACP] + CoA = holo-[ACP] + adenosine 3',5'-bisphosphate + H(+). Transfers the 4'-phosphopantetheine moiety from coenzyme A to a Ser of acyl-carrier-protein. The protein is Holo-[acyl-carrier-protein] synthase of Oenococcus oeni (strain ATCC BAA-331 / PSU-1).